We begin with the raw amino-acid sequence, 256 residues long: Probable ABC transporter ATP-binding protein spyM18_0273 (256 aa).

Residues 4–246 (LEINNLHVSI…EKEGYAGIAQ (243 aa)) form the ABC transporter domain. 36–43 (GPNGTGKS) contacts ATP.

Belongs to the ABC transporter superfamily. Ycf16 family.

It is found in the cell membrane. This chain is Probable ABC transporter ATP-binding protein spyM18_0273, found in Streptococcus pyogenes serotype M18 (strain MGAS8232).